Consider the following 113-residue polypeptide: ATP-dependent Clp protease adapter protein ClpS (113 aa).

The protein belongs to the ClpS family. Binds to the N-terminal domain of the chaperone ClpA.

Functionally, involved in the modulation of the specificity of the ClpAP-mediated ATP-dependent protein degradation. The sequence is that of ATP-dependent Clp protease adapter protein ClpS from Corynebacterium diphtheriae (strain ATCC 700971 / NCTC 13129 / Biotype gravis).